We begin with the raw amino-acid sequence, 224 residues long: Cell division protein SepF (224 aa).

Positions 21–78 are disordered; sequence DDYYEDDDRGPAPRGYRRPREDRFEDEGYAPRGYDGHPEDRRRDYDEPPAYRAGLAGG. The span at 54–66 shows a compositional bias: basic and acidic residues; that stretch reads YDGHPEDRRRDYD.

This sequence belongs to the SepF family. Homodimer. Interacts with FtsZ.

The protein resides in the cytoplasm. Functionally, cell division protein that is part of the divisome complex and is recruited early to the Z-ring. Probably stimulates Z-ring formation, perhaps through the cross-linking of FtsZ protofilaments. Its function overlaps with FtsA. This Mycolicibacterium gilvum (strain PYR-GCK) (Mycobacterium gilvum (strain PYR-GCK)) protein is Cell division protein SepF.